The following is a 153-amino-acid chain: Ribosomal RNA large subunit methyltransferase H (153 aa).

S-adenosyl-L-methionine contacts are provided by residues Ile75, Gly103, and 121-126 (LSAMTF).

The protein belongs to the RNA methyltransferase RlmH family. As to quaternary structure, homodimer.

Its subcellular location is the cytoplasm. It carries out the reaction pseudouridine(1915) in 23S rRNA + S-adenosyl-L-methionine = N(3)-methylpseudouridine(1915) in 23S rRNA + S-adenosyl-L-homocysteine + H(+). Functionally, specifically methylates the pseudouridine at position 1915 (m3Psi1915) in 23S rRNA. The protein is Ribosomal RNA large subunit methyltransferase H of Helicobacter hepaticus (strain ATCC 51449 / 3B1).